Consider the following 498-residue polypeptide: ATP synthase subunit beta, chloroplastic (498 aa).

172-179 (GGAGVGKT) contributes to the ATP binding site.

Belongs to the ATPase alpha/beta chains family. As to quaternary structure, F-type ATPases have 2 components, CF(1) - the catalytic core - and CF(0) - the membrane proton channel. CF(1) has five subunits: alpha(3), beta(3), gamma(1), delta(1), epsilon(1). CF(0) has four main subunits: a(1), b(1), b'(1) and c(9-12).

Its subcellular location is the plastid. The protein localises to the chloroplast thylakoid membrane. The catalysed reaction is ATP + H2O + 4 H(+)(in) = ADP + phosphate + 5 H(+)(out). Produces ATP from ADP in the presence of a proton gradient across the membrane. The catalytic sites are hosted primarily by the beta subunits. This is ATP synthase subunit beta, chloroplastic from Calamus usitatus (Palm tree).